A 474-amino-acid chain; its full sequence is Siroheme synthase (474 aa).

The interval methionine 1–leucine 203 is precorrin-2 dehydrogenase /sirohydrochlorin ferrochelatase. Residues glutamate 22–isoleucine 23 and proline 43–alanine 44 each bind NAD(+). Residue serine 128 is modified to Phosphoserine. A uroporphyrinogen-III C-methyltransferase region spans residues glycine 216–alanine 474. Proline 225 serves as a coordination point for S-adenosyl-L-methionine. The active-site Proton acceptor is the aspartate 248. Lysine 270 functions as the Proton donor in the catalytic mechanism. Residues glycine 302–aspartate 304, isoleucine 307, threonine 332–alanine 333, methionine 384, and glycine 413 each bind S-adenosyl-L-methionine.

In the N-terminal section; belongs to the precorrin-2 dehydrogenase / sirohydrochlorin ferrochelatase family. It in the C-terminal section; belongs to the precorrin methyltransferase family.

The enzyme catalyses uroporphyrinogen III + 2 S-adenosyl-L-methionine = precorrin-2 + 2 S-adenosyl-L-homocysteine + H(+). It carries out the reaction precorrin-2 + NAD(+) = sirohydrochlorin + NADH + 2 H(+). It catalyses the reaction siroheme + 2 H(+) = sirohydrochlorin + Fe(2+). The protein operates within cofactor biosynthesis; adenosylcobalamin biosynthesis; precorrin-2 from uroporphyrinogen III: step 1/1. Its pathway is cofactor biosynthesis; adenosylcobalamin biosynthesis; sirohydrochlorin from precorrin-2: step 1/1. It participates in porphyrin-containing compound metabolism; siroheme biosynthesis; precorrin-2 from uroporphyrinogen III: step 1/1. It functions in the pathway porphyrin-containing compound metabolism; siroheme biosynthesis; siroheme from sirohydrochlorin: step 1/1. The protein operates within porphyrin-containing compound metabolism; siroheme biosynthesis; sirohydrochlorin from precorrin-2: step 1/1. Functionally, multifunctional enzyme that catalyzes the SAM-dependent methylations of uroporphyrinogen III at position C-2 and C-7 to form precorrin-2 via precorrin-1. Then it catalyzes the NAD-dependent ring dehydrogenation of precorrin-2 to yield sirohydrochlorin. Finally, it catalyzes the ferrochelation of sirohydrochlorin to yield siroheme. The protein is Siroheme synthase of Bordetella petrii (strain ATCC BAA-461 / DSM 12804 / CCUG 43448).